A 265-amino-acid polypeptide reads, in one-letter code: 3-methyl-2-oxobutanoate hydroxymethyltransferase (265 aa).

Positions 46 and 85 each coordinate Mg(2+). 3-methyl-2-oxobutanoate contacts are provided by residues Asp46–Ser47, Asp85, and Lys114. Residue Glu116 coordinates Mg(2+). Catalysis depends on Glu183, which acts as the Proton acceptor.

Belongs to the PanB family. In terms of assembly, homodecamer; pentamer of dimers. Mg(2+) is required as a cofactor.

It is found in the cytoplasm. The enzyme catalyses 3-methyl-2-oxobutanoate + (6R)-5,10-methylene-5,6,7,8-tetrahydrofolate + H2O = 2-dehydropantoate + (6S)-5,6,7,8-tetrahydrofolate. It participates in cofactor biosynthesis; coenzyme A biosynthesis. Functionally, catalyzes the reversible reaction in which hydroxymethyl group from 5,10-methylenetetrahydrofolate is transferred onto alpha-ketoisovalerate to form ketopantoate. The chain is 3-methyl-2-oxobutanoate hydroxymethyltransferase from Pyrobaculum calidifontis (strain DSM 21063 / JCM 11548 / VA1).